A 249-amino-acid chain; its full sequence is 23S rRNA (guanosine-2'-O-)-methyltransferase RlmB (249 aa).

3 residues coordinate S-adenosyl-L-methionine: G200, I220, and L229.

It belongs to the class IV-like SAM-binding methyltransferase superfamily. RNA methyltransferase TrmH family. RlmB subfamily.

It localises to the cytoplasm. The enzyme catalyses guanosine(2251) in 23S rRNA + S-adenosyl-L-methionine = 2'-O-methylguanosine(2251) in 23S rRNA + S-adenosyl-L-homocysteine + H(+). Its function is as follows. Specifically methylates the ribose of guanosine 2251 in 23S rRNA. This Xanthomonas axonopodis pv. citri (strain 306) protein is 23S rRNA (guanosine-2'-O-)-methyltransferase RlmB.